A 161-amino-acid polypeptide reads, in one-letter code: Protein-export protein SecB (161 aa).

It belongs to the SecB family. Homotetramer, a dimer of dimers. One homotetramer interacts with 1 SecA dimer.

It is found in the cytoplasm. Functionally, one of the proteins required for the normal export of preproteins out of the cell cytoplasm. It is a molecular chaperone that binds to a subset of precursor proteins, maintaining them in a translocation-competent state. It also specifically binds to its receptor SecA. This chain is Protein-export protein SecB, found in Pseudomonas putida (strain ATCC 700007 / DSM 6899 / JCM 31910 / BCRC 17059 / LMG 24140 / F1).